The chain runs to 142 residues: DNA polymerase III subunit chi (142 aa).

This sequence belongs to the DNA polymerase III chi/HolC chain family. As to quaternary structure, DNA polymerase III contains a core (composed of alpha, epsilon and theta chains) that associates with a tau subunit. This core dimerizes to form the POLIII' complex. PolIII' associates with the gamma complex (composed of gamma, delta, delta', psi and chi chains) and with the beta chain to form the complete DNA polymerase III complex. Interacts directly with the psi subunit (holD). The only subunit of the DNA polymerase III holoenzyme known to interact with single-stranded DNA binding protein (SSB).

It catalyses the reaction DNA(n) + a 2'-deoxyribonucleoside 5'-triphosphate = DNA(n+1) + diphosphate. In terms of biological role, part of the beta sliding clamp loading complex, which hydrolyzes ATP to load the beta clamp onto primed DNA to form the DNA replication pre-initiation complex. DNA polymerase III is a complex, multichain enzyme responsible for most of the replicative synthesis in bacteria. This DNA polymerase also exhibits 3' to 5' exonuclease activity. The polypeptide is DNA polymerase III subunit chi (Pseudomonas aeruginosa (strain ATCC 15692 / DSM 22644 / CIP 104116 / JCM 14847 / LMG 12228 / 1C / PRS 101 / PAO1)).